The sequence spans 203 residues: Glycerol-3-phosphate acyltransferase (203 aa).

6 helical membrane-spanning segments follow: residues 3–23 (ILLA…VVVS), 51–71 (KAAI…VWLV), 74–94 (FGIG…LGHL), 116–136 (AVHP…AFFF), 140–160 (SLAA…LFGT), and 164–178 (PVAW…LLIW).

The protein belongs to the PlsY family. Probably interacts with PlsX.

It localises to the cell inner membrane. It catalyses the reaction an acyl phosphate + sn-glycerol 3-phosphate = a 1-acyl-sn-glycero-3-phosphate + phosphate. Its pathway is lipid metabolism; phospholipid metabolism. Its function is as follows. Catalyzes the transfer of an acyl group from acyl-phosphate (acyl-PO(4)) to glycerol-3-phosphate (G3P) to form lysophosphatidic acid (LPA). This enzyme utilizes acyl-phosphate as fatty acyl donor, but not acyl-CoA or acyl-ACP. This is Glycerol-3-phosphate acyltransferase from Burkholderia pseudomallei (strain 1710b).